We begin with the raw amino-acid sequence, 248 residues long: Inner membrane protein pE248R (248 aa).

Gly-2 is lipidated: N-myristoyl glycine; by host. Residues 2–199 are Cytoplasmic-facing; that stretch reads GGSTSKNSFK…ADAISAVFKN (198 aa). A helical membrane pass occupies residues 200 to 220; it reads IMVAAVVIVLIIVGFIAVFYF. Topologically, residues 221–248 are extracellular; that stretch reads LHSRHRHEEEEEAEPLISNKVLKNAAVS.

Belongs to the asfivirus E248R family. In terms of assembly, interacts with A151R.

It is found in the host membrane. The protein localises to the virion membrane. Its function is as follows. Essential for viral fusion with host endosomal membrane and core release. This chain is Inner membrane protein pE248R, found in Ornithodoros (relapsing fever ticks).